The primary structure comprises 265 residues: Energy-coupling factor transporter transmembrane protein EcfT (265 aa).

Helical transmembrane passes span 29–49, 63–83, 94–114, 117–137, 143–163, and 243–263; these read VMAFIAIVFLANNWLTYALMF, FLFFIKGLQPIFWLILITLLL, LVDLGLLQITTLGLANGAMMF, FVLIIFMTTLLTLTTSPIELT, ILAPFRLVHLPVHELALMLSI, and RFADTCLLISLAVLSGLLFWL.

The protein belongs to the energy-coupling factor EcfT family. In terms of assembly, forms a stable energy-coupling factor (ECF) transporter complex composed of 2 membrane-embedded substrate-binding proteins (S component), 2 ATP-binding proteins (A component) and 2 transmembrane proteins (T component). May be able to interact with more than 1 S component at a time.

Its subcellular location is the cell membrane. Its function is as follows. Transmembrane (T) component of an energy-coupling factor (ECF) ABC-transporter complex. Unlike classic ABC transporters this ECF transporter provides the energy necessary to transport a number of different substrates. The chain is Energy-coupling factor transporter transmembrane protein EcfT from Listeria innocua serovar 6a (strain ATCC BAA-680 / CLIP 11262).